The primary structure comprises 61 residues: Large ribosomal subunit protein eL24 (61 aa).

The Zn(2+) site is built by C7, C10, C33, and C37. The C4-type zinc-finger motif lies at 7–37; the sequence is CSFCGKEIPPATGLMYIRNDGSILWFCSNKC.

This sequence belongs to the eukaryotic ribosomal protein eL24 family. In terms of assembly, part of the 50S ribosomal subunit. Forms a cluster with proteins L3 and L14. The cofactor is Zn(2+).

In terms of biological role, binds to the 23S rRNA. This Sulfurisphaera tokodaii (strain DSM 16993 / JCM 10545 / NBRC 100140 / 7) (Sulfolobus tokodaii) protein is Large ribosomal subunit protein eL24.